We begin with the raw amino-acid sequence, 131 residues long: Photosystem II reaction center Psb28 protein (131 aa).

Residues asparagine 110–alanine 131 form a disordered region. Polar residues predominate over residues leucine 112–alanine 125.

This sequence belongs to the Psb28 family. As to quaternary structure, part of the photosystem II complex.

Its subcellular location is the cellular thylakoid membrane. The sequence is that of Photosystem II reaction center Psb28 protein from Synechococcus sp. (strain CC9902).